The primary structure comprises 308 residues: N-acetylneuraminate lyase (308 aa).

Positions 50 and 51 each coordinate aceneuramate. The Proton donor role is filled by Tyr142. Lys172 acts as the Schiff-base intermediate with substrate in catalysis. 5 residues coordinate aceneuramate: Ser174, Gly198, Asp200, Glu201, and Ser217.

It belongs to the DapA family. NanA subfamily. As to quaternary structure, homotetramer.

It localises to the cytoplasm. It catalyses the reaction aceneuramate = aldehydo-N-acetyl-D-mannosamine + pyruvate. It functions in the pathway amino-sugar metabolism; N-acetylneuraminate degradation. In terms of biological role, catalyzes the cleavage of N-acetylneuraminic acid (sialic acid) to form pyruvate and N-acetylmannosamine via a Schiff base intermediate. It prevents sialic acids from being recycled and returning to the cell surface. Involved in the N-glycolylneuraminic acid (Neu5Gc) degradation pathway. The polypeptide is N-acetylneuraminate lyase (Gallus gallus (Chicken)).